The sequence spans 430 residues: Type II methyltransferase M.Sau96I (430 aa).

The HTH cro/C1-type domain maps to 9–63 (IEKMKNQNIKTQTELAEKIDISKSQLSFMFSDEYEPLKKNVIKLADVLKVSPNDI). The 331-residue stretch at 99–429 (YNVFETFAGA…KSLVHYLNQF (331 aa)) folds into the SAM-dependent MTase C5-type domain. Residue cysteine 174 is part of the active site.

It belongs to the class I-like SAM-binding methyltransferase superfamily. C5-methyltransferase family.

The enzyme catalyses a 2'-deoxycytidine in DNA + S-adenosyl-L-methionine = a 5-methyl-2'-deoxycytidine in DNA + S-adenosyl-L-homocysteine + H(+). Functionally, a methylase that recognizes the double-stranded sequence 5'-GGNCC-3', methylates C-4 on both strands, and protects the DNA from cleavage by the Sau96I endonuclease. The chain is Type II methyltransferase M.Sau96I from Staphylococcus aureus.